Consider the following 1581-residue polypeptide: Maestro heat-like repeat-containing protein family member 2B (1581 aa).

HEAT repeat units lie at residues 123–160 (FMMMTLLTMQTMLRLVEDENMRQTFCIALENFSKSIYK), 305–342 (ANPVDLLDFFDEQIRSTNEAVRTGILTLLRSTINAEEP), 401–441 (MSNR…LVIG), 464–501 (DYLFNIIRILIMAEEKKKRDIQESTALVVSTGAVKLPS), 526–543 (AIGLLKIMPEIIHPKLAE), 544–580 (MWKTRMPALLQPLEGSNASIVLWETMLLQLLKESLWK), 658–695 (ENHLDIVLNVLKTFQDKEKFFVNRCKGIFSGKKSLTKT), 773–815 (TYKE…LKPA), 960–997 (CQEVDRLQGLQEGLDSEDEQVQIKISSKIAKIVCKFIP), 1017–1055 (PLCTKACGIWMIAALKEHGALLEDQLLEILSTIYHHMPV), 1112–1150 (KLMRALIKKLVARLEDDIAGTEAISVACAIYEVILTGAH), 1153–1191 (HLYPELFTLLLKLVSCSLGQKMPMSTLSQRRRVMQLGER), 1254–1291 (GVILDIMEHLLSSLTSSSENYRITGMAFFSELMKEPIL), 1295–1332 (GNLRDVLIFMDQNARDSNAILRQMAIRGLGNTACGAPH), 1359–1379 (CESLKALKKILELLTERDINF), and 1380–1416 (YFKEIVLQTRTFFEDEQDDVRLTAISLFEDLATLTGR).

As to quaternary structure, found in a complex at least composed of MROH2B isoform 2, PRKACA isoform 2 and TCP11. Interacts with PRKACA isoform 2. Interacts with TCP11. In terms of processing, constitutively phosphorylated on serine and threonine residues in acrosomal region of the sperm head, midpiece and flagellar regions of noncapacitated spermatozoa. Phosphorylation on tyrosine residues increases upon sperm capacitation within the acrosomal and tail regions in a protein kinase A (PKA)-dependent signaling pathway. In terms of tissue distribution, expressed strongly in round spermatids and fully mature spermatozoa. Expressed weakly in pachytene spermatocytes (at protein level). Isoform 2 is specifically expressed in the testis. Isoform 2 is expressed in pachytene spermatocytes and round spermatids. Isoform 3 is weakly expressed in testis.

It localises to the cytoplasm. It is found in the cytoplasmic vesicle. The protein localises to the secretory vesicle. Its subcellular location is the acrosome. The protein resides in the cell projection. It localises to the cilium. It is found in the flagellum. In terms of biological role, may play a role in the process of sperm capacitation. This Mus musculus (Mouse) protein is Maestro heat-like repeat-containing protein family member 2B.